Reading from the N-terminus, the 908-residue chain is UPF0182 protein Csac_0864 (908 aa).

7 helical membrane-spanning segments follow: residues 22–42 (FVISILVILAIVFSIAFDLFL), 62–82 (FYVKLSVQVVSFMILFFVFFV), 98–118 (ISLLKKNILNVIVSVLLALIA), 166–186 (FLFYLVIFVCIYTVVLYIVLY), 208–228 (HIFFNLILIFVIKIFTLKYEM), 253–273 (YFRLSYIVLVAVILLSIYFFI), and 286–306 (SYIGWAVLGTIIATAFQYFVV).

It belongs to the UPF0182 family.

Its subcellular location is the cell membrane. The protein is UPF0182 protein Csac_0864 of Caldicellulosiruptor saccharolyticus (strain ATCC 43494 / DSM 8903 / Tp8T 6331).